Consider the following 188-residue polypeptide: Quinone reductase (188 aa).

Residues 13–20 (SLRKGSFN), 82–85 (EYNY), and serine 117 contribute to the FMN site.

Belongs to the SsuE family. In terms of assembly, homotetramer. Dimer of dimers. The tetrameric configuration has a central role in chromate reductase activity. FMN is required as a cofactor.

It carries out the reaction a quinone + NADH + H(+) = a quinol + NAD(+). The catalysed reaction is a quinone + NADPH + H(+) = a quinol + NADP(+). The enzyme catalyses Cr(6+) + 2 NADH + O2 = Cr(3+) + superoxide + 2 NAD(+) + 2 H(+). It catalyses the reaction Cr(6+) + 2 NADPH + O2 = Cr(3+) + superoxide + 2 NADP(+) + 2 H(+). Its function is as follows. Catalyzes the reduction of quinones. Acts by simultaneous two-electron transfer, avoiding formation of highly reactive semiquinone intermediates and producing quinols that promote tolerance of H(2)O(2). Quinone reduction is probably the primary biological role of ChrR. Can also reduce toxic chromate to insoluble and less toxic Cr(3+). Catalyzes the transfer of three electrons to Cr(6+) producing Cr(3+) and one electron to molecular oxygen without producing the toxic Cr(5+) species and only producing a minimal amount of reactive oxygen species (ROS). Chromate reduction protects the cell against chromate toxicity, but is likely a secondary activity. In Escherichia coli O157:H7, this protein is Quinone reductase (chrR).